The following is an 88-amino-acid chain: Putative regulatory protein DvMF_1139 (88 aa).

The protein belongs to the RemA family.

This is Putative regulatory protein DvMF_1139 from Nitratidesulfovibrio vulgaris (strain DSM 19637 / Miyazaki F) (Desulfovibrio vulgaris).